We begin with the raw amino-acid sequence, 227 residues long: Cytochrome c oxidase subunit 2 (227 aa).

The Mitochondrial intermembrane portion of the chain corresponds to 1-14; sequence MAYPFQLGLQDATS. The chain crosses the membrane as a helical span at residues 15–45; that stretch reads PIMEELLHFHDHTLMIVFLISSLVLYIISLM. Residues 46–59 lie on the Mitochondrial matrix side of the membrane; the sequence is LTTKLTHTSTMDAQ. A helical membrane pass occupies residues 60–87; it reads EVETVWTILPAIILISIALPSLRILYMM. Over 88-227 the chain is Mitochondrial intermembrane; it reads DEINNPSLTV…YFEAWSTLMM (140 aa). His-161, Cys-196, Glu-198, Cys-200, His-204, and Met-207 together coordinate Cu cation. Position 198 (Glu-198) interacts with Mg(2+). Position 218 is a phosphotyrosine (Tyr-218).

It belongs to the cytochrome c oxidase subunit 2 family. Component of the cytochrome c oxidase (complex IV, CIV), a multisubunit enzyme composed of 14 subunits. The complex is composed of a catalytic core of 3 subunits MT-CO1, MT-CO2 and MT-CO3, encoded in the mitochondrial DNA, and 11 supernumerary subunits COX4I, COX5A, COX5B, COX6A, COX6B, COX6C, COX7A, COX7B, COX7C, COX8 and NDUFA4, which are encoded in the nuclear genome. The complex exists as a monomer or a dimer and forms supercomplexes (SCs) in the inner mitochondrial membrane with NADH-ubiquinone oxidoreductase (complex I, CI) and ubiquinol-cytochrome c oxidoreductase (cytochrome b-c1 complex, complex III, CIII), resulting in different assemblies (supercomplex SCI(1)III(2)IV(1) and megacomplex MCI(2)III(2)IV(2)). Found in a complex with TMEM177, COA6, COX18, COX20, SCO1 and SCO2. Interacts with TMEM177 in a COX20-dependent manner. Interacts with COX20. Interacts with COX16. Cu cation is required as a cofactor.

Its subcellular location is the mitochondrion inner membrane. The enzyme catalyses 4 Fe(II)-[cytochrome c] + O2 + 8 H(+)(in) = 4 Fe(III)-[cytochrome c] + 2 H2O + 4 H(+)(out). Component of the cytochrome c oxidase, the last enzyme in the mitochondrial electron transport chain which drives oxidative phosphorylation. The respiratory chain contains 3 multisubunit complexes succinate dehydrogenase (complex II, CII), ubiquinol-cytochrome c oxidoreductase (cytochrome b-c1 complex, complex III, CIII) and cytochrome c oxidase (complex IV, CIV), that cooperate to transfer electrons derived from NADH and succinate to molecular oxygen, creating an electrochemical gradient over the inner membrane that drives transmembrane transport and the ATP synthase. Cytochrome c oxidase is the component of the respiratory chain that catalyzes the reduction of oxygen to water. Electrons originating from reduced cytochrome c in the intermembrane space (IMS) are transferred via the dinuclear copper A center (CU(A)) of subunit 2 and heme A of subunit 1 to the active site in subunit 1, a binuclear center (BNC) formed by heme A3 and copper B (CU(B)). The BNC reduces molecular oxygen to 2 water molecules using 4 electrons from cytochrome c in the IMS and 4 protons from the mitochondrial matrix. This is Cytochrome c oxidase subunit 2 (MT-CO2) from Lycaon pictus (African wild dog).